A 496-amino-acid chain; its full sequence is Fibronectin type III and SPRY domain-containing protein 1 (496 aa).

A coiled-coil region spans residues 4-99; that stretch reads QREALRKIIT…ALESSEELLE (96 aa). Residues 105-162 form the COS domain; it reads LQASDSEDFSQAAKEIKDGITMAPAFRLSLKAKVSDNMSHLMVDFAQERQMLQALKFL. In terms of domain architecture, Fibronectin type-III spans 164–268; the sequence is VPSAPTIDLA…EPVTLETPAF (105 aa). Positions 290 to 477 constitute a B30.2/SPRY domain; it reads WDAMGGKVQD…VTTGLQVPSA (188 aa). Residues 301-336 are disordered; the sequence is KAREKEGKGRTASPVNSPARGTPSPKRMSSGRGGRD. An omega-N-methylarginine mark is found at arginine 310 and arginine 320.

Oligomerization is required for binding to microtubules.

It localises to the cytoplasm. It is found in the cytoskeleton. Its subcellular location is the microtubule organizing center. The protein localises to the centrosome. The protein resides in the nucleus. It localises to the cleavage furrow. Functionally, may be involved in microtubule organization and stabilization. The sequence is that of Fibronectin type III and SPRY domain-containing protein 1 (Fsd1) from Mus musculus (Mouse).